The primary structure comprises 110 residues: Period circadian protein (110 aa).

A disordered region spans residues 23-97; it reads VTNTSIAGTG…GGAGGGGGVT (75 aa). 12 tandem repeats follow at residues 30–31, 33–34, 36–37, 38–39, 40–41, 42–43, 44–45, 46–47, 48–49, 50–51, 52–53, and 54–55. The segment covering 30 to 63 has biased composition (gly residues); sequence GTGGTGGTGTGTGTGTGTGTGTGTGTDTGTGTGT. The interval 30–79 is 24 X 2 AA approximate tandem repeats of G-T; the sequence is GTGGTGGTGTGTGTGTGTGTGTGTGTDTGTGTGTRNGTNSGTNSGTRTGT. Residues 56 to 57 form a 13; approximate repeat; that stretch reads DT. 3 repeat units span residues 58-59, 60-61, and 62-63. A 17; approximate repeat occupies 64–65; the sequence is RN. The segment covering 64-83 has biased composition (low complexity); the sequence is RNGTNSGTNSGTRTGTASSY. The stretch at 66–67 is repeat 18; it reads GT. A 19; approximate repeat occupies 68 to 69; sequence NS. Copy 20 of the repeat occupies 70-71; that stretch reads GT. A 21; approximate repeat occupies 72–73; that stretch reads NS. Repeat unit 22 spans residues 74-75; the sequence is GT. The 23; approximate repeat unit spans residues 76-77; the sequence is RT. Residues 78-79 form repeat 24; it reads GT. Gly residues predominate over residues 84 to 96; sequence RGGGGGAGGGGGV.

In terms of assembly, forms a heterodimer with timeless (TIM); the complex then translocates into the nucleus. Phosphorylated with a circadian rhythmicity, probably by the double-time protein (dbt). Phosphorylation could be implicated in the stability of per monomer and in the formation of heterodimer per-tim.

The protein localises to the nucleus. The protein resides in the cytoplasm. Its subcellular location is the perinuclear region. Functionally, essential for biological clock functions. Determines the period length of circadian and ultradian rhythms; an increase in PER dosage leads to shortened circadian rhythms and a decrease leads to lengthened circadian rhythms. Essential for the circadian rhythmicity of locomotor activity, eclosion behavior, and for the rhythmic component of the male courtship song that originates in the thoracic nervous system. The biological cycle depends on the rhythmic formation and nuclear localization of the TIM-PER complex. Light induces the degradation of TIM, which promotes elimination of PER. Nuclear activity of the heterodimer coordinatively regulates PER and TIM transcription through a negative feedback loop. Behaves as a negative element in circadian transcriptional loop. Does not appear to bind DNA, suggesting indirect transcriptional inhibition. The protein is Period circadian protein (per) of Drosophila erecta (Fruit fly).